The following is a 139-amino-acid chain: Putative pre-16S rRNA nuclease (139 aa).

The protein belongs to the YqgF nuclease family.

It is found in the cytoplasm. Its function is as follows. Could be a nuclease involved in processing of the 5'-end of pre-16S rRNA. The protein is Putative pre-16S rRNA nuclease of Streptococcus pneumoniae (strain JJA).